Consider the following 386-residue polypeptide: GTPase Obg (386 aa).

The 159-residue stretch at 4–162 folds into the Obg domain; that stretch reads SNFVDYVKIY…MTVILELKLL (159 aa). Positions 18-45 are disordered; the sequence is KGGRGSTHMRREKYTPNGGPDGGDGGRG. A compositionally biased stretch (gly residues) spans 36–45; it reads GPDGGDGGRG. The OBG-type G domain maps to 163-329; it reads ADVGLVGFPN…LKDILWTELN (167 aa). Residues 169–176, 194–198, 216–219, 283–286, and 310–312 contribute to the GTP site; these read GFPNAGKS, FTTLE, DIPG, TKSD, and SSV. 2 residues coordinate Mg(2+): Ser176 and Thr196. The disordered stretch occupies residues 351–386; sequence ELKDMGEDEELDYEYEDDGDEDDLDYEYEEEDWEDK. Acidic residues predominate over residues 356-386; that stretch reads GEDEELDYEYEDDGDEDDLDYEYEEEDWEDK.

The protein belongs to the TRAFAC class OBG-HflX-like GTPase superfamily. OBG GTPase family. As to quaternary structure, monomer. The cofactor is Mg(2+).

It is found in the cytoplasm. In terms of biological role, an essential GTPase which binds GTP, GDP and possibly (p)ppGpp with moderate affinity, with high nucleotide exchange rates and a fairly low GTP hydrolysis rate. Plays a role in control of the cell cycle, stress response, ribosome biogenesis and in those bacteria that undergo differentiation, in morphogenesis control. The polypeptide is GTPase Obg (Bacteroides fragilis (strain YCH46)).